A 172-amino-acid polypeptide reads, in one-letter code: UPF0114 protein PMI3225 (172 aa).

Transmembrane regions (helical) follow at residues 15–35 (LFAP…IKFF), 57–77 (LLSL…IFSG), 108–128 (KVAA…FMDL), and 136–156 (LLWY…MGYL).

It belongs to the UPF0114 family.

The protein localises to the cell membrane. This chain is UPF0114 protein PMI3225, found in Proteus mirabilis (strain HI4320).